A 721-amino-acid chain; its full sequence is Long-chain-fatty-acid--CoA ligase ACSBG1 (721 aa).

The interval Met-1–Glu-64 is disordered. The segment covering Gln-26 to Leu-43 has biased composition (polar residues). Residues Ser-34, Ser-50, Ser-53, and Ser-70 each carry the phosphoserine modification. Residues Thr-279 to Lys-287, Ala-469 to Ser-474, Asp-547, and Arg-562 each bind ATP. Phosphotyrosine is present on Tyr-655. Residue Lys-698 participates in ATP binding.

This sequence belongs to the ATP-dependent AMP-binding enzyme family. Bubblegum subfamily. As to expression, present in testis, at a lower level in brain, and at a very low level in ovary. Not detected in other tissues. tested. Present in Leydig cells of the adult testis and to a lesser degree in the seminiferous tubules in spermatogonia and Sertoli cells (at protein level).

The protein localises to the cytoplasm. Its subcellular location is the cytoplasmic vesicle. It is found in the microsome. It localises to the endoplasmic reticulum. The protein resides in the cell membrane. The enzyme catalyses a long-chain fatty acid + ATP + CoA = a long-chain fatty acyl-CoA + AMP + diphosphate. It carries out the reaction (E)-hexadec-2-enoate + ATP + CoA = (2E)-hexadecenoyl-CoA + AMP + diphosphate. It catalyses the reaction hexadecanoate + ATP + CoA = hexadecanoyl-CoA + AMP + diphosphate. In terms of biological role, catalyzes the conversion of fatty acids such as long-chain and very long-chain fatty acids to their active form acyl-CoAs for both synthesis of cellular lipids, and degradation via beta-oxidation. Can activate diverse saturated, monosaturated and polyunsaturated fatty acids. The polypeptide is Long-chain-fatty-acid--CoA ligase ACSBG1 (Rattus norvegicus (Rat)).